The following is a 406-amino-acid chain: Solanesyl diphosphate synthase 1, chloroplastic (406 aa).

The N-terminal 71 residues, 1–71 (MMTSCRNIDL…NGIGQSQTVS (71 aa)), are a transit peptide targeting the chloroplast. The isopentenyl diphosphate site is built by K126, R129, and H164. Mg(2+) contacts are provided by D171 and D175. R180 contributes to the an all-trans-polyprenyl diphosphate binding site. Residue R181 coordinates isopentenyl diphosphate. Residues K257, T258, Q295, and K312 each contribute to the an all-trans-polyprenyl diphosphate site.

This sequence belongs to the FPP/GGPP synthase family. As to quaternary structure, homodimer. Interacts with FBN5. Requires Mg(2+) as cofactor. In terms of tissue distribution, higher expression in leaves than in roots.

The protein resides in the plastid. It localises to the chloroplast. The enzyme catalyses 5 isopentenyl diphosphate + (2E,6E,10E)-geranylgeranyl diphosphate = all-trans-nonaprenyl diphosphate + 5 diphosphate. The catalysed reaction is isopentenyl diphosphate + (2E,6E)-farnesyl diphosphate = (2E,6E,10E)-geranylgeranyl diphosphate + diphosphate. In terms of biological role, involved in providing solanesyl diphosphate for plastoquinone-9 (PQ-9) formation in plastids. Catalyzes the elongation of the prenyl side chain of PQ-9 in plastids. Contributes to the biosynthesis of plastochromanol-8 (PC-8) in plastids. Does not contribute to the synthesis of tocopherol or ubiquinone. PQ-9 and PC-8 are lipophilic antioxidants that act as protectant against photooxidative stress under high light stress conditions. Prefers geranylgeranyl diphosphate to farnesyl diphosphate as substrate. No activity with geranyl diphosphate or dimethylallyl diphosphate as substrate. This is Solanesyl diphosphate synthase 1, chloroplastic from Arabidopsis thaliana (Mouse-ear cress).